The chain runs to 504 residues: Arabinose import ATP-binding protein AraG (504 aa).

ABC transporter domains are found at residues 8–243 (LSFR…MVGR) and 256–499 (YGEE…MPKV). ATP is bound at residue 40–47 (GENGAGKS).

It belongs to the ABC transporter superfamily. Arabinose importer (TC 3.A.1.2.2) family. In terms of assembly, the complex is composed of two ATP-binding proteins (AraG), two transmembrane proteins (AraH) and a solute-binding protein (AraF).

The protein resides in the cell inner membrane. It carries out the reaction L-arabinose(out) + ATP + H2O = L-arabinose(in) + ADP + phosphate + H(+). In terms of biological role, part of the ABC transporter complex AraFGH involved in arabinose import. Responsible for energy coupling to the transport system. This chain is Arabinose import ATP-binding protein AraG, found in Shigella sonnei (strain Ss046).